The sequence spans 227 residues: Cytochrome c oxidase subunit 2 (227 aa).

At 1–14 (MAYPFQLGLQDATS) the chain is on the mitochondrial intermembrane side. A helical membrane pass occupies residues 15–45 (PIMEELTNFHDHTLMIVFLISSLVLYIISLM). Residues 46 to 59 (LTTKLTHTNTMDAQ) are Mitochondrial matrix-facing. Residues 60-87 (EVETIWTILPAVILILIALPSLRILYMM) form a helical membrane-spanning segment. At 88–227 (DEINNPALTV…HFENWSASMI (140 aa)) the chain is on the mitochondrial intermembrane side. The Cu cation site is built by His-161, Cys-196, Glu-198, Cys-200, His-204, and Met-207. Glu-198 provides a ligand contact to Mg(2+).

The protein belongs to the cytochrome c oxidase subunit 2 family. In terms of assembly, component of the cytochrome c oxidase (complex IV, CIV), a multisubunit enzyme composed of 14 subunits. The complex is composed of a catalytic core of 3 subunits MT-CO1, MT-CO2 and MT-CO3, encoded in the mitochondrial DNA, and 11 supernumerary subunits COX4I, COX5A, COX5B, COX6A, COX6B, COX6C, COX7A, COX7B, COX7C, COX8 and NDUFA4, which are encoded in the nuclear genome. The complex exists as a monomer or a dimer and forms supercomplexes (SCs) in the inner mitochondrial membrane with NADH-ubiquinone oxidoreductase (complex I, CI) and ubiquinol-cytochrome c oxidoreductase (cytochrome b-c1 complex, complex III, CIII), resulting in different assemblies (supercomplex SCI(1)III(2)IV(1) and megacomplex MCI(2)III(2)IV(2)). Found in a complex with TMEM177, COA6, COX18, COX20, SCO1 and SCO2. Interacts with TMEM177 in a COX20-dependent manner. Interacts with COX20. Interacts with COX16. The cofactor is Cu cation.

It is found in the mitochondrion inner membrane. The catalysed reaction is 4 Fe(II)-[cytochrome c] + O2 + 8 H(+)(in) = 4 Fe(III)-[cytochrome c] + 2 H2O + 4 H(+)(out). Component of the cytochrome c oxidase, the last enzyme in the mitochondrial electron transport chain which drives oxidative phosphorylation. The respiratory chain contains 3 multisubunit complexes succinate dehydrogenase (complex II, CII), ubiquinol-cytochrome c oxidoreductase (cytochrome b-c1 complex, complex III, CIII) and cytochrome c oxidase (complex IV, CIV), that cooperate to transfer electrons derived from NADH and succinate to molecular oxygen, creating an electrochemical gradient over the inner membrane that drives transmembrane transport and the ATP synthase. Cytochrome c oxidase is the component of the respiratory chain that catalyzes the reduction of oxygen to water. Electrons originating from reduced cytochrome c in the intermembrane space (IMS) are transferred via the dinuclear copper A center (CU(A)) of subunit 2 and heme A of subunit 1 to the active site in subunit 1, a binuclear center (BNC) formed by heme A3 and copper B (CU(B)). The BNC reduces molecular oxygen to 2 water molecules using 4 electrons from cytochrome c in the IMS and 4 protons from the mitochondrial matrix. The chain is Cytochrome c oxidase subunit 2 (MT-CO2) from Sundamys muelleri (Mueller's giant sunda rat).